A 547-amino-acid polypeptide reads, in one-letter code: Eukaryotic translation initiation factor 3 subunit D (547 aa).

Disordered regions lie at residues 1–22 (MANFVLPPIHDNSDGSWGPSTS) and 114–159 (SVRG…TRDS). The segment covering 126–148 (GRGGQRGGFSTRGGRGGARGGYG) has biased composition (gly residues). The segment at 284–298 (PLDYITVNENAADPP) is RNA gate.

The protein belongs to the eIF-3 subunit D family. Component of the eukaryotic translation initiation factor 3 (eIF-3) complex.

It is found in the cytoplasm. MRNA cap-binding component of the eukaryotic translation initiation factor 3 (eIF-3) complex, which is involved in protein synthesis of a specialized repertoire of mRNAs and, together with other initiation factors, stimulates binding of mRNA and methionyl-tRNAi to the 40S ribosome. The eIF-3 complex specifically targets and initiates translation of a subset of mRNAs involved in cell proliferation. In the eIF-3 complex, eif3d specifically recognizes and binds the 7-methylguanosine cap of a subset of mRNAs. This Cryptococcus neoformans var. neoformans serotype D (strain B-3501A) (Filobasidiella neoformans) protein is Eukaryotic translation initiation factor 3 subunit D.